Here is a 356-residue protein sequence, read N- to C-terminus: UDP-N-acetylglucosamine--N-acetylmuramyl-(pentapeptide) pyrophosphoryl-undecaprenol N-acetylglucosamine transferase (356 aa).

Residues arginine 166, serine 196, and glutamine 290 each contribute to the UDP-N-acetyl-alpha-D-glucosamine site.

It belongs to the glycosyltransferase 28 family. MurG subfamily.

Its subcellular location is the cell membrane. The catalysed reaction is Mur2Ac(oyl-L-Ala-gamma-D-Glu-L-Lys-D-Ala-D-Ala)-di-trans,octa-cis-undecaprenyl diphosphate + UDP-N-acetyl-alpha-D-glucosamine = beta-D-GlcNAc-(1-&gt;4)-Mur2Ac(oyl-L-Ala-gamma-D-Glu-L-Lys-D-Ala-D-Ala)-di-trans,octa-cis-undecaprenyl diphosphate + UDP + H(+). It participates in cell wall biogenesis; peptidoglycan biosynthesis. Cell wall formation. Catalyzes the transfer of a GlcNAc subunit on undecaprenyl-pyrophosphoryl-MurNAc-pentapeptide (lipid intermediate I) to form undecaprenyl-pyrophosphoryl-MurNAc-(pentapeptide)GlcNAc (lipid intermediate II). The sequence is that of UDP-N-acetylglucosamine--N-acetylmuramyl-(pentapeptide) pyrophosphoryl-undecaprenol N-acetylglucosamine transferase from Staphylococcus aureus (strain MW2).